The primary structure comprises 529 residues: Cytochrome P450 monooxygenase okaD (529 aa).

Residues 13–35 (LPAQHLLASLALVGALLSVGYLL) form a helical membrane-spanning segment. Cysteine 435 provides a ligand contact to heme.

It belongs to the cytochrome P450 family. Requires heme as cofactor.

It localises to the membrane. It carries out the reaction okaramine C + 2 reduced [NADPH--hemoprotein reductase] + 2 O2 = okaramine A + 2 oxidized [NADPH--hemoprotein reductase] + 4 H2O + 2 H(+). It functions in the pathway alkaloid biosynthesis. In terms of biological role, cytochrome P450 monooxygenase; part of the gene cluster that mediates the biosynthesis of okaramine B, a prenylated indole alkaloid that possesses an unusual octacyclic ring system, including a four-membered azetidine ring and an eight-membered azocine ring, and that exhibits insecticidal activity against silkworm larvae. Within the pathway, okaD likely catalyzes a key step in forming the eight-membered ring of okaramine A using as substrate okaramine C. The biosynthesis begins with the NRPS okaA that condenses two tryptophan molecules into cyclo(L-Trp-L-Trp). Prenylation by the prenyltransferase okaC then leads to the formation of cyclo(N8-(alpha,alpha-dimethylallyl)-L-Trp-6a-(alpha,alpha-dime-thylallyl)-L-Trp). This is followed by indole 2,3-epoxidation by the FAD-dependent monooxygenase okaB to facilitate the formation of the hexahydropyrrolo[2,3-b]indole (HPI) moiety of okaramine C. The cytochrome P450 monooxygenase okaD then likely catalyzes formation of the eight-membered ring of okaramine A. The dioxygenase okaE further forms the unusual 2-dimethyl-3-methyl-azetidine ring to yield 12-deshydroxyl okaramine E, as well as the hydroxylation of 12-deshydroxyl okaramine E to produce okaramine E. The cytochrome P450 monoxygenase okaG converts 12-deshydroxyl okaramine E into 3-desmethyl okaramine B which is further methylated by the methyltransferase okaF into okaramine B. In a shunt pathway, okaG and okaF together are also able to convert okaramine E into okaramine D. Okaramine H is produced by nonenzymatic conversion from okaramine A. The polypeptide is Cytochrome P450 monooxygenase okaD (Penicillium ochrochloron).